The following is a 492-amino-acid chain: Ketol-acid reductoisomerase (NADP(+)) (492 aa).

The region spanning A15–S208 is the KARI N-terminal Rossmann domain. NADP(+)-binding positions include C45 to Q48, R68, R76, S78, and D108 to Q110. H132 is an active-site residue. Residue G158 participates in NADP(+) binding. 2 consecutive KARI C-terminal knotted domains span residues S209 to T353 and Y354 to M486. Positions 217, 221, 389, and 393 each coordinate Mg(2+). S414 is a substrate binding site.

The protein belongs to the ketol-acid reductoisomerase family. Mg(2+) serves as cofactor.

It carries out the reaction (2R)-2,3-dihydroxy-3-methylbutanoate + NADP(+) = (2S)-2-acetolactate + NADPH + H(+). It catalyses the reaction (2R,3R)-2,3-dihydroxy-3-methylpentanoate + NADP(+) = (S)-2-ethyl-2-hydroxy-3-oxobutanoate + NADPH + H(+). It participates in amino-acid biosynthesis; L-isoleucine biosynthesis; L-isoleucine from 2-oxobutanoate: step 2/4. The protein operates within amino-acid biosynthesis; L-valine biosynthesis; L-valine from pyruvate: step 2/4. Its function is as follows. Involved in the biosynthesis of branched-chain amino acids (BCAA). Catalyzes an alkyl-migration followed by a ketol-acid reduction of (S)-2-acetolactate (S2AL) to yield (R)-2,3-dihydroxy-isovalerate. In the isomerase reaction, S2AL is rearranged via a Mg-dependent methyl migration to produce 3-hydroxy-3-methyl-2-ketobutyrate (HMKB). In the reductase reaction, this 2-ketoacid undergoes a metal-dependent reduction by NADPH to yield (R)-2,3-dihydroxy-isovalerate. This Shewanella oneidensis (strain ATCC 700550 / JCM 31522 / CIP 106686 / LMG 19005 / NCIMB 14063 / MR-1) protein is Ketol-acid reductoisomerase (NADP(+)).